A 394-amino-acid chain; its full sequence is Ornithine aminotransferase 1 (394 aa).

Position 252 is an N6-(pyridoxal phosphate)lysine (lysine 252).

The protein belongs to the class-III pyridoxal-phosphate-dependent aminotransferase family. OAT subfamily. Requires pyridoxal 5'-phosphate as cofactor.

The protein resides in the cytoplasm. The enzyme catalyses a 2-oxocarboxylate + L-ornithine = L-glutamate 5-semialdehyde + an L-alpha-amino acid. Its pathway is amino-acid biosynthesis; L-proline biosynthesis; L-glutamate 5-semialdehyde from L-ornithine: step 1/1. In terms of biological role, catalyzes the interconversion of ornithine to glutamate semialdehyde. The protein is Ornithine aminotransferase 1 of Staphylococcus saprophyticus subsp. saprophyticus (strain ATCC 15305 / DSM 20229 / NCIMB 8711 / NCTC 7292 / S-41).